A 341-amino-acid chain; its full sequence is S-adenosylmethionine:tRNA ribosyltransferase-isomerase (341 aa).

It belongs to the QueA family. Monomer.

It is found in the cytoplasm. The catalysed reaction is 7-aminomethyl-7-carbaguanosine(34) in tRNA + S-adenosyl-L-methionine = epoxyqueuosine(34) in tRNA + adenine + L-methionine + 2 H(+). It functions in the pathway tRNA modification; tRNA-queuosine biosynthesis. Functionally, transfers and isomerizes the ribose moiety from AdoMet to the 7-aminomethyl group of 7-deazaguanine (preQ1-tRNA) to give epoxyqueuosine (oQ-tRNA). This is S-adenosylmethionine:tRNA ribosyltransferase-isomerase from Clostridium kluyveri (strain NBRC 12016).